Consider the following 256-residue polypeptide: MIKRVNKLVLGISLLFLVISITAGCGMGKEAEIKKSFEKTLSMYPIKNLEDLYDKEGYRDDQFDKNDKGTWIVNSQMAIQNKGEALKIKGMLLKIDRNTRSAKGFYYTNEIKTEKYEVAQDNQKKYPVKMINNKFISTEEVKEENIKKEIENFKFFAQYSNFKDLMNYKDGDISYNPEVPSYSAQYQLTNDDYNVKQLRKRYDIPTNKAPKLLLKGTGNLKGSSVGYKKIEFTFLENKNENIYFTDSLHLEPSEDK.

An N-terminal signal peptide occupies residues Met1–Gly24. Cys25 carries the N-palmitoyl cysteine lipid modification. Cys25 is lipidated: S-diacylglycerol cysteine.

This sequence belongs to the staphylococcal tandem lipoprotein family.

It localises to the cell membrane. This is an uncharacterized protein from Staphylococcus aureus (strain NCTC 8325 / PS 47).